Reading from the N-terminus, the 213-residue chain is Probable chemoreceptor glutamine deamidase CheD (213 aa).

Residues 1–12 (MNRHRPHSHRSK) are compositionally biased toward basic residues. Residues 1 to 25 (MNRHRPHSHRSKPASTQDQPDSVRR) form a disordered region.

Belongs to the CheD family.

The catalysed reaction is L-glutaminyl-[protein] + H2O = L-glutamyl-[protein] + NH4(+). Its function is as follows. Probably deamidates glutamine residues to glutamate on methyl-accepting chemotaxis receptors (MCPs), playing an important role in chemotaxis. In Rhodopseudomonas palustris (strain BisA53), this protein is Probable chemoreceptor glutamine deamidase CheD.